The chain runs to 146 residues: Peptide methionine sulfoxide reductase MsrB (146 aa).

The region spanning 6–129 (SAEAIAKLSA…NSASLRFVPK (124 aa)) is the MsrB domain. Cysteine 118 serves as the catalytic Nucleophile.

Belongs to the MsrB Met sulfoxide reductase family.

The enzyme catalyses L-methionyl-[protein] + [thioredoxin]-disulfide + H2O = L-methionyl-(R)-S-oxide-[protein] + [thioredoxin]-dithiol. The protein is Peptide methionine sulfoxide reductase MsrB of Brucella melitensis biotype 1 (strain ATCC 23456 / CCUG 17765 / NCTC 10094 / 16M).